We begin with the raw amino-acid sequence, 356 residues long: Delta(7)-sterol 5(6)-desaturase (356 aa).

A run of 3 helical transmembrane segments spans residues 87 to 107, 134 to 154, and 171 to 191; these read LTLYLITWLFGVCVYYLFAGL, QANIAFPIMAIFTVPWFLAEV, and WYDYLQIPFFIAFTDLCIYWI. Positions 179 to 303 constitute a Fatty acid hydroxylase domain; sequence FFIAFTDLCI…FTTLWDRLGG (125 aa). The short motif at 192 to 196 is the Histidine box-1 element; it reads HRGLH. The Histidine box-2 motif lies at 205–209; the sequence is HKPHH. The chain crosses the membrane as a helical span at residues 235 to 255; it reads YIFPFLFPLSKIASVAFFVFV. The short motif at 280 to 284 is the Histidine box-3 element; sequence HTMHH.

Belongs to the sterol desaturase family. Requires Fe cation as cofactor.

The protein resides in the endoplasmic reticulum membrane. It catalyses the reaction a Delta(7)-sterol + 2 Fe(II)-[cytochrome b5] + O2 + 2 H(+) = a Delta(5),Delta(7)-sterol + 2 Fe(III)-[cytochrome b5] + 2 H2O. The protein operates within steroid metabolism; ergosterol biosynthesis; ergosterol from zymosterol: step 3/5. Its function is as follows. Catalyzes the introduction of a C-5 double bond in the B ring of ergosterol. May contribute to the regulation of ergosterol biosynthesis. The sequence is that of Delta(7)-sterol 5(6)-desaturase (ERG3) from Leptosphaeria maculans (Blackleg fungus).